The chain runs to 439 residues: Serine/threonine-protein kinase 2 (439 aa).

The Protein kinase domain occupies 87 to 439 (NDDFYHISTG…IFSDWINGGN (353 aa)). ATP-binding positions include 93–101 (ISTGGYGIV) and Lys117. The Proton acceptor role is filled by Asp307.

This sequence belongs to the protein kinase superfamily. Ser/Thr protein kinase family. Poxviruses subfamily. Phosphorylated in vivo. Autophosphorylated in vitro.

It localises to the host endoplasmic reticulum. The protein localises to the host endoplasmic reticulum-Golgi intermediate compartment. The enzyme catalyses L-seryl-[protein] + ATP = O-phospho-L-seryl-[protein] + ADP + H(+). It catalyses the reaction L-threonyl-[protein] + ATP = O-phospho-L-threonyl-[protein] + ADP + H(+). Functionally, essential serine-protein kinase involved in the early stage of virion morphogenesis. The chain is Serine/threonine-protein kinase 2 (OPG054) from Vaccinia virus (strain Copenhagen) (VACV).